A 333-amino-acid chain; its full sequence is Cytochrome f (333 aa).

Residues 1 to 16 (MRNVFRTARLTRSARA) form the signal peptide. The chain crosses the membrane as a helical span at residues 17–36 (IVKTLLIAIATVTFYFTSDL). 4 residues coordinate heme: tyrosine 45, cysteine 66, cysteine 69, and histidine 70. The chain crosses the membrane as a helical span at residues 299-319 (VKWMIAFVALVMLAQVMLVLK).

The protein belongs to the cytochrome f family. As to quaternary structure, the 4 large subunits of the cytochrome b6-f complex are cytochrome b6, subunit IV (17 kDa polypeptide, PetD), cytochrome f and the Rieske protein, while the 4 small subunits are PetG, PetL, PetM and PetN. The complex functions as a dimer. Heme serves as cofactor.

Its subcellular location is the cellular thylakoid membrane. In terms of biological role, component of the cytochrome b6-f complex, which mediates electron transfer between photosystem II (PSII) and photosystem I (PSI), cyclic electron flow around PSI, and state transitions. This is Cytochrome f from Nostoc punctiforme (strain ATCC 29133 / PCC 73102).